A 186-amino-acid chain; its full sequence is Lipid A acyltransferase PagP (186 aa).

A signal peptide spans 1-25 (MNVSKYVAIFSFVFIQLISVGKVFA). Residues His58, Asp101, and Ser102 contribute to the active site.

Belongs to the lipid A palmitoyltransferase family. In terms of assembly, homodimer.

It localises to the cell outer membrane. The catalysed reaction is a lipid A + a 1,2-diacyl-sn-glycero-3-phosphocholine = a hepta-acyl lipid A + a 2-acyl-sn-glycero-3-phosphocholine. The enzyme catalyses a lipid IVA + a 1,2-diacyl-sn-glycero-3-phosphocholine = a lipid IVB + a 2-acyl-sn-glycero-3-phosphocholine. It carries out the reaction a lipid IIA + a 1,2-diacyl-sn-glycero-3-phosphocholine = a lipid IIB + a 2-acyl-sn-glycero-3-phosphocholine. Functionally, transfers a fatty acid residue from the sn-1 position of a phospholipid to the N-linked hydroxyfatty acid chain on the proximal unit of lipid A or its precursors. The sequence is that of Lipid A acyltransferase PagP from Shigella boydii serotype 4 (strain Sb227).